Here is a 572-residue protein sequence, read N- to C-terminus: Putative carbohydrate transport ATP-binding protein MPN_258 (572 aa).

2 ABC transporter domains span residues 6 to 253 and 327 to 572; these read FRME…MGKE and RFIR…LIMQ. 40–47 serves as a coordination point for ATP; sequence GENGAGKS.

It belongs to the ABC transporter superfamily.

Its subcellular location is the cell membrane. In terms of biological role, part of the ABC transporter complex involved in carbohydrates import. Probably responsible for energy coupling to the transport system. In Mycoplasma pneumoniae (strain ATCC 29342 / M129 / Subtype 1) (Mycoplasmoides pneumoniae), this protein is Putative carbohydrate transport ATP-binding protein MPN_258.